Consider the following 286-residue polypeptide: 2-dehydro-3-deoxyphosphooctonate aldolase (286 aa).

This sequence belongs to the KdsA family.

The protein resides in the cytoplasm. It catalyses the reaction D-arabinose 5-phosphate + phosphoenolpyruvate + H2O = 3-deoxy-alpha-D-manno-2-octulosonate-8-phosphate + phosphate. It participates in carbohydrate biosynthesis; 3-deoxy-D-manno-octulosonate biosynthesis; 3-deoxy-D-manno-octulosonate from D-ribulose 5-phosphate: step 2/3. The protein operates within bacterial outer membrane biogenesis; lipopolysaccharide biosynthesis. The polypeptide is 2-dehydro-3-deoxyphosphooctonate aldolase (Haemophilus ducreyi (strain 35000HP / ATCC 700724)).